We begin with the raw amino-acid sequence, 536 residues long: Chaperonin GroEL (536 aa).

ATP is bound by residues 30 to 33 (TLGP), 86 to 90 (DGTTT), glycine 414, and aspartate 494.

This sequence belongs to the chaperonin (HSP60) family. As to quaternary structure, forms a cylinder of 14 subunits composed of two heptameric rings stacked back-to-back. Interacts with the co-chaperonin GroES.

The protein localises to the cytoplasm. The catalysed reaction is ATP + H2O + a folded polypeptide = ADP + phosphate + an unfolded polypeptide.. Its function is as follows. Together with its co-chaperonin GroES, plays an essential role in assisting protein folding. The GroEL-GroES system forms a nano-cage that allows encapsulation of the non-native substrate proteins and provides a physical environment optimized to promote and accelerate protein folding. The chain is Chaperonin GroEL from Methanospirillum hungatei JF-1 (strain ATCC 27890 / DSM 864 / NBRC 100397 / JF-1).